The primary structure comprises 229 residues: Orotate phosphoribosyltransferase (229 aa).

5-phospho-alpha-D-ribose 1-diphosphate is bound by residues Arg107, Lys108, Lys111, His113, and 133–141 (EDLTTAGGS). Thr137 provides a ligand contact to orotate.

Belongs to the purine/pyrimidine phosphoribosyltransferase family. PyrE subfamily. As to quaternary structure, homodimer. Mg(2+) is required as a cofactor.

The enzyme catalyses orotidine 5'-phosphate + diphosphate = orotate + 5-phospho-alpha-D-ribose 1-diphosphate. The protein operates within pyrimidine metabolism; UMP biosynthesis via de novo pathway; UMP from orotate: step 1/2. Catalyzes the transfer of a ribosyl phosphate group from 5-phosphoribose 1-diphosphate to orotate, leading to the formation of orotidine monophosphate (OMP). The protein is Orotate phosphoribosyltransferase of Rhizobium etli (strain CIAT 652).